The sequence spans 169 residues: Thermonuclease (169 aa).

An N-terminal signal peptide occupies residues 1–26 (MKKITTGLIIVVAAIIVLSIQFMTES). Residues R65, E73, and R115 contribute to the active site.

The protein belongs to the thermonuclease family. The cofactor is Ca(2+).

It is found in the secreted. The catalysed reaction is Endonucleolytic cleavage to nucleoside 3'-phosphates and 3'-phosphooligonucleotide end-products.. Its function is as follows. Enzyme that catalyzes the hydrolysis of both DNA and RNA at the 5'-position of the phosphodiester bond. The sequence is that of Thermonuclease (nucH) from Staphylococcus hyicus.